Here is a 443-residue protein sequence, read N- to C-terminus: Glucose-6-phosphate isomerase (443 aa).

The active-site Proton donor is Glu-285. Catalysis depends on residues His-306 and Lys-420.

The protein belongs to the GPI family.

It localises to the cytoplasm. It catalyses the reaction alpha-D-glucose 6-phosphate = beta-D-fructose 6-phosphate. It participates in carbohydrate biosynthesis; gluconeogenesis. The protein operates within carbohydrate degradation; glycolysis; D-glyceraldehyde 3-phosphate and glycerone phosphate from D-glucose: step 2/4. Catalyzes the reversible isomerization of glucose-6-phosphate to fructose-6-phosphate. This is Glucose-6-phosphate isomerase from Staphylococcus aureus (strain Mu3 / ATCC 700698).